Here is a 118-residue protein sequence, read N- to C-terminus: Small ribosomal subunit protein uS13 (118 aa).

The interval 96-118 (PLRGQRTRTNARTRKGPRKAIKK) is disordered.

The protein belongs to the universal ribosomal protein uS13 family. Part of the 30S ribosomal subunit. Forms a loose heterodimer with protein S19. Forms two bridges to the 50S subunit in the 70S ribosome.

Its function is as follows. Located at the top of the head of the 30S subunit, it contacts several helices of the 16S rRNA. In the 70S ribosome it contacts the 23S rRNA (bridge B1a) and protein L5 of the 50S subunit (bridge B1b), connecting the 2 subunits; these bridges are implicated in subunit movement. Contacts the tRNAs in the A and P-sites. The sequence is that of Small ribosomal subunit protein uS13 from Stenotrophomonas maltophilia (strain K279a).